Reading from the N-terminus, the 309-residue chain is DNA-directed RNA polymerase subunit alpha (309 aa).

The interval 1 to 225 is alpha N-terminal domain (alpha-NTD); the sequence is MFQVQCLESA…SLFKLVNSAD (225 aa). An alpha C-terminal domain (alpha-CTD) region spans residues 237-309; it reads IVQVSQTDVT…LHERFNLTLN (73 aa).

The protein belongs to the RNA polymerase alpha chain family. In terms of assembly, in plastids the minimal PEP RNA polymerase catalytic core is composed of four subunits: alpha, beta, beta', and beta''. When a (nuclear-encoded) sigma factor is associated with the core the holoenzyme is formed, which can initiate transcription.

It localises to the plastid. It is found in the chloroplast. The enzyme catalyses RNA(n) + a ribonucleoside 5'-triphosphate = RNA(n+1) + diphosphate. Its function is as follows. DNA-dependent RNA polymerase catalyzes the transcription of DNA into RNA using the four ribonucleoside triphosphates as substrates. This is DNA-directed RNA polymerase subunit alpha from Emiliania huxleyi (Coccolithophore).